We begin with the raw amino-acid sequence, 368 residues long: tRNA/tmRNA (uracil-C(5))-methyltransferase (368 aa).

Residues Gln192, Tyr220, Asn225, Glu241, and Asp301 each coordinate S-adenosyl-L-methionine. Cys326 acts as the Nucleophile in catalysis. Glu360 (proton acceptor) is an active-site residue.

This sequence belongs to the class I-like SAM-binding methyltransferase superfamily. RNA M5U methyltransferase family. TrmA subfamily.

The enzyme catalyses uridine(54) in tRNA + S-adenosyl-L-methionine = 5-methyluridine(54) in tRNA + S-adenosyl-L-homocysteine + H(+). The catalysed reaction is uridine(341) in tmRNA + S-adenosyl-L-methionine = 5-methyluridine(341) in tmRNA + S-adenosyl-L-homocysteine + H(+). Dual-specificity methyltransferase that catalyzes the formation of 5-methyluridine at position 54 (m5U54) in all tRNAs, and that of position 341 (m5U341) in tmRNA (transfer-mRNA). This Actinobacillus pleuropneumoniae serotype 3 (strain JL03) protein is tRNA/tmRNA (uracil-C(5))-methyltransferase.